A 258-amino-acid chain; its full sequence is Snake venom serine protease HS114 (258 aa).

The first 18 residues, 1–18 (MVLVRVVANLLILQLSYA), serve as a signal peptide directing secretion. The propeptide occupies 19–24 (QKVSEL). Residues 25-249 (VVGGDECNIN…YNTWIESVIA (225 aa)) enclose the Peptidase S1 domain. Intrachain disulfides connect cysteine 31/cysteine 163, cysteine 50/cysteine 66, cysteine 98/cysteine 256, cysteine 142/cysteine 210, cysteine 174/cysteine 189, and cysteine 200/cysteine 225. N-linked (GlcNAc...) asparagine glycosylation occurs at asparagine 44. Residues histidine 65 and aspartate 110 each act as charge relay system in the active site. Residue serine 204 is the Charge relay system of the active site.

Belongs to the peptidase S1 family. Snake venom subfamily. As to quaternary structure, monomer. Post-translationally, N-glycosylated. Contains approximately 10% carbohydrates. Expressed by the venom gland.

The protein resides in the secreted. Inhibited by benzamidine, PMSF, leupeptin, SDS and DTT, but not by EDTA, and commercial antivenom. In terms of biological role, snake venom serine protease that shows non-specific action on fibrinogen. It preferentially degrades fibrinogen Aalpha (FGA), releasing fibrinopeptide A, and shows a lower activity on fibrinogen Bbeta (FGB), releasing fibrinopeptide B and other uncommon fibrinopeptides. Also shows low fibrinolytic activity compared to plasmin. Has high enzymatic activity on the substrates for activated protein C and factor XIa, and for thrombin. Shows a wide activity spectrum at different peptide sequences, with a preferential cleavage at Lys-|-Xaa over Arg-|-Xaa bonds. This Bothrops jararaca (Jararaca) protein is Snake venom serine protease HS114.